The sequence spans 249 residues: MVERLDGVFKSISDFLRQELNGKNAVIGVSSGIDSALVLTILSKAIDKDRIHAFFMPDRFTRSADFDDIRSLEGSTGVKINEINIENIVNGYKSTLGINDKKYEGNIRSRVRSVILYYNANLLNGLVVGTTNRTEYLIGYFTKYGDGACDLEPIEHLYKSDVRELASYLKVPESIIRKKPSAGLWGDQYDEDELGMGYEELDSILKDLFEKKTGILDDRYKMVYDMYIRSQHKRKLPKSMMNDDFRYNV.

Residue Asp34 participates in Mg(2+) binding. Residue Arg110 participates in deamido-NAD(+) binding. Thr130 is a binding site for ATP. Glu135 serves as a coordination point for Mg(2+). Residues Lys143 and Asp150 each contribute to the deamido-NAD(+) site. Lys159 and Ser181 together coordinate ATP. 232–233 provides a ligand contact to deamido-NAD(+); the sequence is HK.

It belongs to the NAD synthetase family. In terms of assembly, homodimer.

It carries out the reaction deamido-NAD(+) + NH4(+) + ATP = AMP + diphosphate + NAD(+) + H(+). The protein operates within cofactor biosynthesis; NAD(+) biosynthesis; NAD(+) from deamido-NAD(+) (ammonia route): step 1/1. Catalyzes the ATP-dependent amidation of deamido-NAD to form NAD. Uses ammonia as a nitrogen source. In Picrophilus torridus (strain ATCC 700027 / DSM 9790 / JCM 10055 / NBRC 100828 / KAW 2/3), this protein is NH(3)-dependent NAD(+) synthetase.